Consider the following 75-residue polypeptide: UPF0352 protein ETA_12580 (75 aa).

Belongs to the UPF0352 family.

This Erwinia tasmaniensis (strain DSM 17950 / CFBP 7177 / CIP 109463 / NCPPB 4357 / Et1/99) protein is UPF0352 protein ETA_12580.